Consider the following 490-residue polypeptide: Aspartyl/glutamyl-tRNA(Asn/Gln) amidotransferase subunit B (490 aa).

The protein belongs to the GatB/GatE family. GatB subfamily. Heterotrimer of A, B and C subunits.

The enzyme catalyses L-glutamyl-tRNA(Gln) + L-glutamine + ATP + H2O = L-glutaminyl-tRNA(Gln) + L-glutamate + ADP + phosphate + H(+). It carries out the reaction L-aspartyl-tRNA(Asn) + L-glutamine + ATP + H2O = L-asparaginyl-tRNA(Asn) + L-glutamate + ADP + phosphate + 2 H(+). In terms of biological role, allows the formation of correctly charged Asn-tRNA(Asn) or Gln-tRNA(Gln) through the transamidation of misacylated Asp-tRNA(Asn) or Glu-tRNA(Gln) in organisms which lack either or both of asparaginyl-tRNA or glutaminyl-tRNA synthetases. The reaction takes place in the presence of glutamine and ATP through an activated phospho-Asp-tRNA(Asn) or phospho-Glu-tRNA(Gln). The chain is Aspartyl/glutamyl-tRNA(Asn/Gln) amidotransferase subunit B from Burkholderia pseudomallei (strain K96243).